Here is a 191-residue protein sequence, read N- to C-terminus: Rubrerythrin (191 aa).

The Ferritin-like diiron domain maps to 1 to 146 (MKSLKGSRTE…DFARNIKEGR (146 aa)). Residues glutamate 20, glutamate 53, glutamate 94, glutamate 97, glutamate 128, histidine 131, cysteine 158, cysteine 161, cysteine 174, and cysteine 177 each contribute to the Fe(3+) site. Residues 153–191 (ATKWRCRNCGYVHEGTGAPELCPACAHPKAHFELLGINW) form the Rubredoxin-like domain.

As to quaternary structure, homodimer. Possesses two rubredoxin-like centers and two non-sulfur oxo-bridged di-iron centers per dimer. The cofactor is Fe(3+).

Its subcellular location is the cytoplasm. In terms of biological role, may provide oxidative stress protection via catalytic reduction of intracellular hydrogen peroxide. This Nitratidesulfovibrio vulgaris (strain ATCC 29579 / DSM 644 / CCUG 34227 / NCIMB 8303 / VKM B-1760 / Hildenborough) (Desulfovibrio vulgaris) protein is Rubrerythrin (rbr).